The following is a 298-amino-acid chain: ATP synthase gamma chain (298 aa).

It belongs to the ATPase gamma chain family. In terms of assembly, F-type ATPases have 2 components, CF(1) - the catalytic core - and CF(0) - the membrane proton channel. CF(1) has five subunits: alpha(3), beta(3), gamma(1), delta(1), epsilon(1). CF(0) has three main subunits: a, b and c.

The protein resides in the cell inner membrane. Its function is as follows. Produces ATP from ADP in the presence of a proton gradient across the membrane. The gamma chain is believed to be important in regulating ATPase activity and the flow of protons through the CF(0) complex. This chain is ATP synthase gamma chain, found in Francisella tularensis subsp. tularensis (strain FSC 198).